The sequence spans 230 residues: Large ribosomal subunit protein uL3 (230 aa).

Disordered regions lie at residues 125–149 (QAIG…SLGD) and 210–230 (PNPK…VKNE).

The protein belongs to the universal ribosomal protein uL3 family. In terms of assembly, part of the 50S ribosomal subunit. Forms a cluster with proteins L14 and L19.

In terms of biological role, one of the primary rRNA binding proteins, it binds directly near the 3'-end of the 23S rRNA, where it nucleates assembly of the 50S subunit. The sequence is that of Large ribosomal subunit protein uL3 from Mesomycoplasma hyopneumoniae (strain J / ATCC 25934 / NCTC 10110) (Mycoplasma hyopneumoniae).